We begin with the raw amino-acid sequence, 273 residues long: 4-hydroxy-tetrahydrodipicolinate reductase (273 aa).

Residues 11-16 and 106-108 each bind NAD(+); these read GATGKM and GTT. The Proton donor/acceptor role is filled by His162. (S)-2,3,4,5-tetrahydrodipicolinate is bound at residue His163. Lys166 serves as the catalytic Proton donor. 172 to 173 contributes to the (S)-2,3,4,5-tetrahydrodipicolinate binding site; the sequence is GT.

It belongs to the DapB family.

It localises to the cytoplasm. It catalyses the reaction (S)-2,3,4,5-tetrahydrodipicolinate + NAD(+) + H2O = (2S,4S)-4-hydroxy-2,3,4,5-tetrahydrodipicolinate + NADH + H(+). It carries out the reaction (S)-2,3,4,5-tetrahydrodipicolinate + NADP(+) + H2O = (2S,4S)-4-hydroxy-2,3,4,5-tetrahydrodipicolinate + NADPH + H(+). It participates in amino-acid biosynthesis; L-lysine biosynthesis via DAP pathway; (S)-tetrahydrodipicolinate from L-aspartate: step 4/4. Its function is as follows. Catalyzes the conversion of 4-hydroxy-tetrahydrodipicolinate (HTPA) to tetrahydrodipicolinate. This is 4-hydroxy-tetrahydrodipicolinate reductase from Synechococcus sp. (strain ATCC 27144 / PCC 6301 / SAUG 1402/1) (Anacystis nidulans).